We begin with the raw amino-acid sequence, 1073 residues long: MDTRGYSETKKGRYPVGKKSLESPNGYSNYGTSMDNELSSEYASRGMHIGDLENLVNEIEDEWKDLGREDYQPISTALELLDDSSFGRDYKSFLNVYDRISAALQTIAHTHKDDFTRGISAYGEIMEGIQKCNSRIIALKQSLEASQECIGNTNSKELQQTLARSSQYKKVISVLKELNEANQLFDNFHTLVDSKQYYHASDLIRRVWDELSRSDFDGILVVEQFKSRMTGLLSHLEDILSEELVSITFLKDAVAYPIVSYCSPNPLRETSNPYFLRDFLKNNANTSTLGQSEQLRYLEEALSLKLSDCLKMDYGRDSLRDIRIVLESLNLLGKLPNAISSLKSRTSAEMFTTVDSTSRAIVNKYSLGNNVSTVNPFSKSLYDIGLHAETDREHTMISEFLTNLFTKLRCVLMHYRGISEFMTKLETKTPKHASSSHKSSIMSVNSDPTSPKVSKFDTSDSTFPFDTLLQAFESEIRLMLKDYLISKEEYIENSGNFVVGTEMSIYNLPGENEEDKLFDVTNEIAVENKSNAFYARINELVNEKAPELILNKSNASVSTIELFSGSSKEIVRLAGHVVFVGPSVFHASSVLPQTVFFLEDSVSILKNPNIPPQFAVNFMKEFLRGSYIPQLYKFMSSHFDTIMKDVGAFQLHRDWKIYSKIPIFKCHVAIVQYFHDLQDYLPIVALNLVEFYELLHTLLVRFRNHCSDYLSDLCRTAVLKEYKHVNEDTEDVDDTVRVKLLHDDVTYPQFIKFLKQKNPSLEGLNELCRMENKRLLQYEDRAITSEVKLPVSVLSKDSDLVNSVSYLHNSMEWFLQRCFSRFMNGSRRMNVLQQNQANFGGDFLPIDNLLGNNSDLMKGAYKEVFDSLQRLQFDALLLIRMEVRLQYIHSINQSVNLPDYVVEYRGRPDASIMALNSTIVTTNLKLETCLNEWERRFVFQGLSELVDSSLYSIFYKIESMNRGSCLQMLKNMSAMIQILKTVKEIHGDVEFPKSSRVFGIYQNGAKKIIEHFIAAPKKELLPDVKQMVRIYYQRLMKDAKRNGRDDLYRQYQKKIGSVLTQFDNTVGGARKNP.

Positions 1-11 (MDTRGYSETKK) are enriched in basic and acidic residues. The segment at 1-33 (MDTRGYSETKKGRYPVGKKSLESPNGYSNYGTS) is disordered. The span at 22–33 (ESPNGYSNYGTS) shows a compositional bias: polar residues. A Phosphothreonine modification is found at T449. The residue at position 450 (S450) is a Phosphoserine.

In terms of assembly, component of the exocyst complex composed of sec3, sec5, sec6, sec8, sec10, sec15 and exo70.

It is found in the cytoplasm. It localises to the cell tip. The protein resides in the cytoskeleton. The protein localises to the cytoplasmic vesicle. In terms of biological role, component of the exocyst complex involved in the delivery of secretory vesicles to the plasma membrane. Also required for polarized cell growth and division septum assembly. The exocyst complex plays an important role in the targeting of rho3, as well as the two main hydrolases required for cell separation, eng1 and agn1, to the cell wall surrounding the septum before cell separation begins. This chain is Exocyst complex component sec8 (sec8), found in Schizosaccharomyces pombe (strain 972 / ATCC 24843) (Fission yeast).